The sequence spans 382 residues: ORC1-type DNA replication protein 1 (382 aa).

ATP-binding positions include 63 to 67 (TGKTA), Tyr205, and Arg217.

This sequence belongs to the CDC6/cdc18 family. As to quaternary structure, monomer. Interacts with MCM via the WH domain. Autophosphorylated on a serine. Phosphorylation is stimulated by binding to MCM. Both single-stranded DNA and double-stranded DNA inhibit the phosphorylation reaction.

Involved in regulation of DNA replication. May play an essential role in origin recognition. Binds to DNA, with a preference for origin-specific double-stranded sequences. Does not bind single-stranded DNA. Inhibits MCM helicase activity but does not affect its oligomeric state. The protein is ORC1-type DNA replication protein 1 (cdc6-1) of Methanothermobacter thermautotrophicus (strain ATCC 29096 / DSM 1053 / JCM 10044 / NBRC 100330 / Delta H) (Methanobacterium thermoautotrophicum).